We begin with the raw amino-acid sequence, 105 residues long: Cuticle protein AMP2 (105 aa).

Positions 1–21 (DRDAQTLTDERSDQGDGNFRY) are disordered. The 66-residue stretch at 16–81 (DGNFRYEFET…PSSDLLPVGP (66 aa)) folds into the Chitin-binding type R&amp;R domain.

As to expression, arthrodial membrane.

In Homarus americanus (American lobster), this protein is Cuticle protein AMP2.